The following is a 115-amino-acid chain: Protein V2 (115 aa).

Belongs to the geminiviridae protein AV2/V2 family. Interacts with host SGS3.

It localises to the host cytoplasm. The protein resides in the host perinuclear region. Through its interaction with host SGS3, acts as a suppressor of RNA-mediated gene silencing, also known as post-transcriptional gene silencing (PTGS), a mechanism of plant viral defense that limits the accumulation of viral RNAs. This chain is Protein V2, found in Tomato yellow leaf curl China virus (TYLCCNV).